Reading from the N-terminus, the 143-residue chain is Glycine cleavage system H protein 1 (143 aa).

The region spanning 26–107 (IYSVGMASIL…PYSSWIAKLK (82 aa)) is the Lipoyl-binding domain. Residue lysine 67 is modified to N6-lipoyllysine.

This sequence belongs to the GcvH family. As to quaternary structure, the glycine cleavage system is composed of four proteins: P, T, L and H. It depends on (R)-lipoate as a cofactor.

In terms of biological role, the glycine cleavage system catalyzes the degradation of glycine. The H protein shuttles the methylamine group of glycine from the P protein to the T protein. The sequence is that of Glycine cleavage system H protein 1 from Aquifex aeolicus (strain VF5).